A 136-amino-acid polypeptide reads, in one-letter code: Large ribosomal subunit protein uL16c (136 aa).

Residues 1–20 form a disordered region; the sequence is MLSPKRTRFRKQHRGRMKGK.

This sequence belongs to the universal ribosomal protein uL16 family. As to quaternary structure, part of the 50S ribosomal subunit.

Its subcellular location is the plastid. It localises to the chloroplast. This Triticum aestivum (Wheat) protein is Large ribosomal subunit protein uL16c.